The following is a 138-amino-acid chain: Regulator of ribonuclease activity B (138 aa).

Residues 111–138 form a disordered region; sequence WGTYFEDPNGEEGDDDDYVDEDDDGVRH. Residues 118–138 are compositionally biased toward acidic residues; sequence PNGEEGDDDDYVDEDDDGVRH.

It belongs to the RraB family. Interacts with the C-terminal region of Rne.

The protein resides in the cytoplasm. Globally modulates RNA abundance by binding to RNase E (Rne) and regulating its endonucleolytic activity. Can modulate Rne action in a substrate-dependent manner by altering the composition of the degradosome. The sequence is that of Regulator of ribonuclease activity B from Salmonella typhi.